The sequence spans 918 residues: Isoleucine--tRNA ligase (918 aa).

The 'HIGH' region signature appears at 59 to 69 (PYANGHLHIGH). An L-isoleucyl-5'-AMP-binding site is contributed by E570. The short motif at 611 to 615 (KMSKS) is the 'KMSKS' region element. K614 contributes to the ATP binding site. 4 residues coordinate Zn(2+): C893, C896, C908, and C911.

Belongs to the class-I aminoacyl-tRNA synthetase family. IleS type 1 subfamily. In terms of assembly, monomer. Zn(2+) serves as cofactor.

It localises to the cytoplasm. It carries out the reaction tRNA(Ile) + L-isoleucine + ATP = L-isoleucyl-tRNA(Ile) + AMP + diphosphate. Its function is as follows. Catalyzes the attachment of isoleucine to tRNA(Ile). As IleRS can inadvertently accommodate and process structurally similar amino acids such as valine, to avoid such errors it has two additional distinct tRNA(Ile)-dependent editing activities. One activity is designated as 'pretransfer' editing and involves the hydrolysis of activated Val-AMP. The other activity is designated 'posttransfer' editing and involves deacylation of mischarged Val-tRNA(Ile). The polypeptide is Isoleucine--tRNA ligase (Campylobacter concisus (strain 13826)).